The chain runs to 305 residues: UDP-N-acetylenolpyruvoylglucosamine reductase (305 aa).

The region spanning 37-202 (GIGGPARFLA…LSVTFNLEPK (166 aa)) is the FAD-binding PCMH-type domain. The active site involves R183.

The protein belongs to the MurB family. FAD serves as cofactor.

It is found in the cytoplasm. The enzyme catalyses UDP-N-acetyl-alpha-D-muramate + NADP(+) = UDP-N-acetyl-3-O-(1-carboxyvinyl)-alpha-D-glucosamine + NADPH + H(+). The protein operates within cell wall biogenesis; peptidoglycan biosynthesis. Cell wall formation. The chain is UDP-N-acetylenolpyruvoylglucosamine reductase from Rhodopirellula baltica (strain DSM 10527 / NCIMB 13988 / SH1).